We begin with the raw amino-acid sequence, 153 residues long: Riboflavin synthase (153 aa).

The protein belongs to the DMRL synthase family.

The catalysed reaction is 2 6,7-dimethyl-8-(1-D-ribityl)lumazine + H(+) = 5-amino-6-(D-ribitylamino)uracil + riboflavin. It participates in cofactor biosynthesis; riboflavin biosynthesis; riboflavin from 2-hydroxy-3-oxobutyl phosphate and 5-amino-6-(D-ribitylamino)uracil: step 2/2. The protein is Riboflavin synthase (ribC) of Archaeoglobus fulgidus (strain ATCC 49558 / DSM 4304 / JCM 9628 / NBRC 100126 / VC-16).